Reading from the N-terminus, the 146-residue chain is Deoxyuridine 5'-triphosphate nucleotidohydrolase (146 aa).

Residues 66–68 (RSG), asparagine 79, and 83–85 (TID) each bind substrate.

The protein belongs to the dUTPase family. The cofactor is Mg(2+).

The catalysed reaction is dUTP + H2O = dUMP + diphosphate + H(+). The protein operates within pyrimidine metabolism; dUMP biosynthesis; dUMP from dCTP (dUTP route): step 2/2. Its function is as follows. This enzyme is involved in nucleotide metabolism: it produces dUMP, the immediate precursor of thymidine nucleotides and it decreases the intracellular concentration of dUTP so that uracil cannot be incorporated into DNA. The sequence is that of Deoxyuridine 5'-triphosphate nucleotidohydrolase from Citrifermentans bemidjiense (strain ATCC BAA-1014 / DSM 16622 / JCM 12645 / Bem) (Geobacter bemidjiensis).